A 437-amino-acid chain; its full sequence is Ribosomal protein uS12 methylthiotransferase RimO (437 aa).

The MTTase N-terminal domain occupies 4–114 (PRVSFVSLGC…VMSAVHEAVP (111 aa)). The [4Fe-4S] cluster site is built by Cys-13, Cys-49, Cys-78, Cys-145, Cys-149, and Cys-152. In terms of domain architecture, Radical SAM core spans 131 to 369 (LTPRHYAYLK…MAKQQQISTN (239 aa)). In terms of domain architecture, TRAM spans 372 to 437 (KKKVGKRLPV…DAYDLHGIAV (66 aa)).

It belongs to the methylthiotransferase family. RimO subfamily. It depends on [4Fe-4S] cluster as a cofactor.

The protein localises to the cytoplasm. It catalyses the reaction L-aspartate(89)-[ribosomal protein uS12]-hydrogen + (sulfur carrier)-SH + AH2 + 2 S-adenosyl-L-methionine = 3-methylsulfanyl-L-aspartate(89)-[ribosomal protein uS12]-hydrogen + (sulfur carrier)-H + 5'-deoxyadenosine + L-methionine + A + S-adenosyl-L-homocysteine + 2 H(+). Its function is as follows. Catalyzes the methylthiolation of an aspartic acid residue of ribosomal protein uS12. The chain is Ribosomal protein uS12 methylthiotransferase RimO from Brucella anthropi (strain ATCC 49188 / DSM 6882 / CCUG 24695 / JCM 21032 / LMG 3331 / NBRC 15819 / NCTC 12168 / Alc 37) (Ochrobactrum anthropi).